The following is a 352-amino-acid chain: Ion-translocating oxidoreductase complex subunit D (352 aa).

Helical transmembrane passes span 20–40 (IMLLVLLAAVPGIAAQLWFFG), 42–62 (GTLVQILLASVSALLAEALVL), 89–109 (IPPLAPWWMVVLGTVFAVIIA), and 123–143 (PAMIGYVVLLISFPVQMTSWL). Threonine 187 carries the FMN phosphoryl threonine modification. 5 helical membrane passes run 214–234 (ILAGAGWQWVNLAWLAGGVWL), 242–262 (WHIPLSFLVTLALCATLGWLF), 267–287 (LASPQIHLLSGATMLGAFFIL), 301–321 (LIFGALAGLLVWLIRSFGGYP), and 322–342 (DGVAFAVLLANITVPLIDYYT).

Belongs to the NqrB/RnfD family. In terms of assembly, the complex is composed of six subunits: RsxA, RsxB, RsxC, RsxD, RsxE and RsxG. The cofactor is FMN.

It localises to the cell inner membrane. Functionally, part of a membrane-bound complex that couples electron transfer with translocation of ions across the membrane. Required to maintain the reduced state of SoxR. The chain is Ion-translocating oxidoreductase complex subunit D from Escherichia coli O17:K52:H18 (strain UMN026 / ExPEC).